Consider the following 325-residue polypeptide: Forkhead box protein B1 (325 aa).

The segment at residues Q12 to L103 is a DNA-binding region (fork-head). Over residues L284–S309 the composition is skewed to low complexity. The interval L284–H325 is disordered.

The protein resides in the nucleus. Functionally, transcription factor expressed by neural progenitor cells in specific regions of the embryonic neuroepithelium. Essential for the mammillary nuclei maintenance. Negatively regulates the proliferation of oligodendrocyte progenitors and promotes oligodendrocyte maturation. Also expressed in mammary glands, plays a role in lactation, controls development of mammary glands and the inferior colliculi of the midbrain in the central nervous system that regulates the milk-ejection reflex. The protein is Forkhead box protein B1 (FOXB1) of Homo sapiens (Human).